A 546-amino-acid polypeptide reads, in one-letter code: Chaperonin GroEL 2 (546 aa).

Residues Thr30–Pro33, Lys51, Asp87–Thr91, Gly415, Asn479–Ala481, and Asp495 each bind ATP. Residues Ala524–Phe546 are disordered. The segment covering Pro537 to Phe546 has biased composition (gly residues).

The protein belongs to the chaperonin (HSP60) family. Forms a cylinder of 14 subunits composed of two heptameric rings stacked back-to-back. Interacts with the co-chaperonin GroES.

The protein localises to the cytoplasm. The enzyme catalyses ATP + H2O + a folded polypeptide = ADP + phosphate + an unfolded polypeptide.. In terms of biological role, together with its co-chaperonin GroES, plays an essential role in assisting protein folding. The GroEL-GroES system forms a nano-cage that allows encapsulation of the non-native substrate proteins and provides a physical environment optimized to promote and accelerate protein folding. In Burkholderia pseudomallei (strain 1710b), this protein is Chaperonin GroEL 2.